The following is an 89-amino-acid chain: Small ribosomal subunit protein uS15 (89 aa).

It belongs to the universal ribosomal protein uS15 family. In terms of assembly, part of the 30S ribosomal subunit. Forms a bridge to the 50S subunit in the 70S ribosome, contacting the 23S rRNA.

One of the primary rRNA binding proteins, it binds directly to 16S rRNA where it helps nucleate assembly of the platform of the 30S subunit by binding and bridging several RNA helices of the 16S rRNA. Its function is as follows. Forms an intersubunit bridge (bridge B4) with the 23S rRNA of the 50S subunit in the ribosome. In Paracoccus denitrificans (strain Pd 1222), this protein is Small ribosomal subunit protein uS15.